A 249-amino-acid chain; its full sequence is Leucyl/phenylalanyl-tRNA--protein transferase (249 aa).

The protein belongs to the L/F-transferase family.

It localises to the cytoplasm. It carries out the reaction N-terminal L-lysyl-[protein] + L-leucyl-tRNA(Leu) = N-terminal L-leucyl-L-lysyl-[protein] + tRNA(Leu) + H(+). It catalyses the reaction N-terminal L-arginyl-[protein] + L-leucyl-tRNA(Leu) = N-terminal L-leucyl-L-arginyl-[protein] + tRNA(Leu) + H(+). The enzyme catalyses L-phenylalanyl-tRNA(Phe) + an N-terminal L-alpha-aminoacyl-[protein] = an N-terminal L-phenylalanyl-L-alpha-aminoacyl-[protein] + tRNA(Phe). Functions in the N-end rule pathway of protein degradation where it conjugates Leu, Phe and, less efficiently, Met from aminoacyl-tRNAs to the N-termini of proteins containing an N-terminal arginine or lysine. This chain is Leucyl/phenylalanyl-tRNA--protein transferase, found in Xanthomonas axonopodis pv. citri (strain 306).